The following is a 347-amino-acid chain: Phosphoribosylformylglycinamidine cyclo-ligase (347 aa).

This sequence belongs to the AIR synthase family.

Its subcellular location is the cytoplasm. The enzyme catalyses 2-formamido-N(1)-(5-O-phospho-beta-D-ribosyl)acetamidine + ATP = 5-amino-1-(5-phospho-beta-D-ribosyl)imidazole + ADP + phosphate + H(+). It participates in purine metabolism; IMP biosynthesis via de novo pathway; 5-amino-1-(5-phospho-D-ribosyl)imidazole from N(2)-formyl-N(1)-(5-phospho-D-ribosyl)glycinamide: step 2/2. In Prochlorococcus marinus (strain MIT 9312), this protein is Phosphoribosylformylglycinamidine cyclo-ligase.